Reading from the N-terminus, the 677-residue chain is UvrABC system protein B (677 aa).

Residues 24–412 (EGVLEGVPAQ…EGIVVEQVIR (389 aa)) enclose the Helicase ATP-binding domain. ATP is bound at residue 37-44 (GVTGSGKT). Residues 90–113 (YYDYYQPEAYLPSSDTYIEKDLAI) carry the Beta-hairpin motif. Residues 429-591 (QIDDLMEEIQ…ITPQQIKKAR (163 aa)) enclose the Helicase C-terminal domain. The UVR domain occupies 635 to 670 (EKSMERTRKLMQEAAKKLEFIEAAQYRDELLKMEDL).

The protein belongs to the UvrB family. As to quaternary structure, forms a heterotetramer with UvrA during the search for lesions. Interacts with UvrC in an incision complex.

Its subcellular location is the cytoplasm. Functionally, the UvrABC repair system catalyzes the recognition and processing of DNA lesions. A damage recognition complex composed of 2 UvrA and 2 UvrB subunits scans DNA for abnormalities. Upon binding of the UvrA(2)B(2) complex to a putative damaged site, the DNA wraps around one UvrB monomer. DNA wrap is dependent on ATP binding by UvrB and probably causes local melting of the DNA helix, facilitating insertion of UvrB beta-hairpin between the DNA strands. Then UvrB probes one DNA strand for the presence of a lesion. If a lesion is found the UvrA subunits dissociate and the UvrB-DNA preincision complex is formed. This complex is subsequently bound by UvrC and the second UvrB is released. If no lesion is found, the DNA wraps around the other UvrB subunit that will check the other stand for damage. This Bacteroides fragilis (strain YCH46) protein is UvrABC system protein B.